The primary structure comprises 470 residues: 3-oxo-isoapionate kinase (470 aa).

Positions 30 and 78 each coordinate substrate. ATP contacts are provided by residues Ser-291, 403–406 (GGDS), and Gly-451.

This sequence belongs to the four-carbon acid sugar kinase family.

It catalyses the reaction 3-oxoisoapionate + ATP = 3-oxoisoapionate 4-phosphate + ADP + H(+). It functions in the pathway carbohydrate metabolism. Involved in catabolism of D-apiose. Catalyzes the phosphorylation of 3-oxo-isoapionate to 3-oxo-isoapionate 4-phosphate. The protein is 3-oxo-isoapionate kinase of Paraburkholderia graminis (strain ATCC 700544 / DSM 17151 / LMG 18924 / NCIMB 13744 / C4D1M).